A 92-amino-acid chain; its full sequence is Sec-independent protein translocase protein TatA (92 aa).

The chain crosses the membrane as a helical span at residues 1 to 21 (MGIFDWKHWIVILVVVVLVFG). Positions 44–92 (NDDEKPADPVVNPVPPAQPVHPQATQPITERRTFDVQAEKVEEPTRKDS) are disordered. The span at 72-92 (TERRTFDVQAEKVEEPTRKDS) shows a compositional bias: basic and acidic residues.

This sequence belongs to the TatA/E family. The Tat system comprises two distinct complexes: a TatABC complex, containing multiple copies of TatA, TatB and TatC subunits, and a separate TatA complex, containing only TatA subunits. Substrates initially bind to the TatABC complex, which probably triggers association of the separate TatA complex to form the active translocon.

Its subcellular location is the cell inner membrane. Functionally, part of the twin-arginine translocation (Tat) system that transports large folded proteins containing a characteristic twin-arginine motif in their signal peptide across membranes. TatA could form the protein-conducting channel of the Tat system. This is Sec-independent protein translocase protein TatA from Pseudomonas fluorescens (strain SBW25).